Reading from the N-terminus, the 91-residue chain is Probable Fe(2+)-trafficking protein (91 aa).

It belongs to the Fe(2+)-trafficking protein family. As to quaternary structure, monomer.

Its function is as follows. Could be a mediator in iron transactions between iron acquisition and iron-requiring processes, such as synthesis and/or repair of Fe-S clusters in biosynthetic enzymes. This is Probable Fe(2+)-trafficking protein from Citrobacter koseri (strain ATCC BAA-895 / CDC 4225-83 / SGSC4696).